Here is a 160-residue protein sequence, read N- to C-terminus: Eukaryotic translation initiation factor 5A-4 (160 aa).

Residues 1-12 (MSDEEHHFESKA) are compositionally biased toward basic and acidic residues. Residues 1 to 21 (MSDEEHHFESKADAGASKTYP) are disordered. K52 bears the Hypusine mark.

Belongs to the eIF-5A family. Post-translationally, lys-52 undergoes hypusination, a unique post-translational modification that consists in the addition of a butylamino group from spermidine to lysine side chain, leading to the formation of the unusual amino acid hypusine. eIF-5As are the only known proteins to undergo this modification, which is essential for their function.

In terms of biological role, translation factor that promotes translation elongation and termination, particularly upon ribosome stalling at specific amino acid sequence contexts. Binds between the exit (E) and peptidyl (P) site of the ribosome and promotes rescue of stalled ribosome: specifically required for efficient translation of polyproline-containing peptides as well as other motifs that stall the ribosome. Acts as a ribosome quality control (RQC) cofactor by joining the RQC complex to facilitate peptidyl transfer during CAT tailing step. The sequence is that of Eukaryotic translation initiation factor 5A-4 from Solanum lycopersicum (Tomato).